The sequence spans 440 residues: Chromosome partition protein MukF (440 aa).

The tract at residues 208 to 236 (LSETSGTLRELQDTLEAAGDKLQANLLRI) is leucine-zipper.

Belongs to the MukF family. As to quaternary structure, interacts, and probably forms a ternary complex, with MukE and MukB via its C-terminal region. The complex formation is stimulated by calcium or magnesium. It is required for an interaction between MukE and MukB.

The protein resides in the cytoplasm. The protein localises to the nucleoid. Involved in chromosome condensation, segregation and cell cycle progression. May participate in facilitating chromosome segregation by condensation DNA from both sides of a centrally located replisome during cell division. Not required for mini-F plasmid partitioning. Probably acts via its interaction with MukB and MukE. Overexpression results in anucleate cells. It has a calcium binding activity. The chain is Chromosome partition protein MukF from Yersinia pestis.